Here is a 410-residue protein sequence, read N- to C-terminus: Probable serine/threonine-protein kinase PBL8 (410 aa).

Residues 1–10 (MGNCGTRDEA) are compositionally biased toward basic and acidic residues. Positions 1–45 (MGNCGTRDEAAVFTPQAQAQQLQKKHSRSVSDLSDPSTPRFRDDS) are disordered. Gly2 carries N-myristoyl glycine lipidation. The S-palmitoyl cysteine moiety is linked to residue Cys4. Thr58 is subject to Phosphothreonine. Positions 69–350 (FRPDYILGEG…DVVETLEPLQ (282 aa)) constitute a Protein kinase domain. ATP is bound by residues 75–83 (LGEGGFGTV) and Lys104. Tyr149 is subject to Phosphotyrosine. Catalysis depends on Asp199, which acts as the Proton acceptor. 2 positions are modified to phosphoserine: Ser203 and Ser233. A phosphothreonine mark is found at Thr234 and Thr239. The residue at position 247 (Tyr247) is a Phosphotyrosine.

The protein belongs to the protein kinase superfamily. Ser/Thr protein kinase family. As to quaternary structure, interacts with the Xanthomonas campestris effector XopAC/AvrAC.

The protein localises to the cell membrane. The enzyme catalyses L-seryl-[protein] + ATP = O-phospho-L-seryl-[protein] + ADP + H(+). The catalysed reaction is L-threonyl-[protein] + ATP = O-phospho-L-threonyl-[protein] + ADP + H(+). May be involved in plant defense signaling. The polypeptide is Probable serine/threonine-protein kinase PBL8 (Arabidopsis thaliana (Mouse-ear cress)).